Reading from the N-terminus, the 207-residue chain is dITP/XTP pyrophosphatase (207 aa).

7-12 (SNNAKK) is a substrate binding site. Asp-72 functions as the Proton acceptor in the catalytic mechanism. Asp-72 is a binding site for Mg(2+). Substrate-binding positions include Ser-73, 155-158 (FGYD), Lys-183, and 188-189 (HR).

It belongs to the HAM1 NTPase family. Homodimer. Requires Mg(2+) as cofactor.

The enzyme catalyses XTP + H2O = XMP + diphosphate + H(+). The catalysed reaction is dITP + H2O = dIMP + diphosphate + H(+). It carries out the reaction ITP + H2O = IMP + diphosphate + H(+). In terms of biological role, pyrophosphatase that catalyzes the hydrolysis of nucleoside triphosphates to their monophosphate derivatives, with a high preference for the non-canonical purine nucleotides XTP (xanthosine triphosphate), dITP (deoxyinosine triphosphate) and ITP. Seems to function as a house-cleaning enzyme that removes non-canonical purine nucleotides from the nucleotide pool, thus preventing their incorporation into DNA/RNA and avoiding chromosomal lesions. The chain is dITP/XTP pyrophosphatase from Corynebacterium diphtheriae (strain ATCC 700971 / NCTC 13129 / Biotype gravis).